Reading from the N-terminus, the 103-residue chain is MYAVIKTGGQQFRVEQGTTLKIEKLEIESGKKVTFKEVLMVADGDNVRVGTPFVPKVTVEAKIISQGKEKKVHILKFRRRKHSMKQQGHRQLFTEIEIVKIKA.

Belongs to the bacterial ribosomal protein bL21 family. Part of the 50S ribosomal subunit. Contacts protein L20.

This protein binds to 23S rRNA in the presence of protein L20. This chain is Large ribosomal subunit protein bL21, found in Ruthia magnifica subsp. Calyptogena magnifica.